Here is a 174-residue protein sequence, read N- to C-terminus: Large ribosomal subunit protein uL10 (174 aa).

The protein belongs to the universal ribosomal protein uL10 family. As to quaternary structure, part of the ribosomal stalk of the 50S ribosomal subunit. The N-terminus interacts with L11 and the large rRNA to form the base of the stalk. The C-terminus forms an elongated spine to which L12 dimers bind in a sequential fashion forming a multimeric L10(L12)X complex.

In terms of biological role, forms part of the ribosomal stalk, playing a central role in the interaction of the ribosome with GTP-bound translation factors. The polypeptide is Large ribosomal subunit protein uL10 (Desulfovibrio desulfuricans (strain ATCC 27774 / DSM 6949 / MB)).